The sequence spans 353 residues: UDP-N-acetylglucosamine--N-acetylmuramyl-(pentapeptide) pyrophosphoryl-undecaprenol N-acetylglucosamine transferase (353 aa).

UDP-N-acetyl-alpha-D-glucosamine contacts are provided by residues 10–12 (TGG), Asn124, Ser183, and Gln283.

The protein belongs to the glycosyltransferase 28 family. MurG subfamily.

The protein resides in the cell inner membrane. The enzyme catalyses di-trans,octa-cis-undecaprenyl diphospho-N-acetyl-alpha-D-muramoyl-L-alanyl-D-glutamyl-meso-2,6-diaminopimeloyl-D-alanyl-D-alanine + UDP-N-acetyl-alpha-D-glucosamine = di-trans,octa-cis-undecaprenyl diphospho-[N-acetyl-alpha-D-glucosaminyl-(1-&gt;4)]-N-acetyl-alpha-D-muramoyl-L-alanyl-D-glutamyl-meso-2,6-diaminopimeloyl-D-alanyl-D-alanine + UDP + H(+). It functions in the pathway cell wall biogenesis; peptidoglycan biosynthesis. Cell wall formation. Catalyzes the transfer of a GlcNAc subunit on undecaprenyl-pyrophosphoryl-MurNAc-pentapeptide (lipid intermediate I) to form undecaprenyl-pyrophosphoryl-MurNAc-(pentapeptide)GlcNAc (lipid intermediate II). The chain is UDP-N-acetylglucosamine--N-acetylmuramyl-(pentapeptide) pyrophosphoryl-undecaprenol N-acetylglucosamine transferase from Helicobacter pylori (strain ATCC 700392 / 26695) (Campylobacter pylori).